Consider the following 267-residue polypeptide: 3-oxoadipate enol-lactonase 2 (267 aa).

The enzyme catalyses (4,5-dihydro-5-oxofuran-2-yl)-acetate + H2O = 3-oxoadipate + H(+). It participates in aromatic compound metabolism; beta-ketoadipate pathway; 3-oxoadipate from 5-oxo-4,5-dihydro-2-furylacetate: step 1/1. The polypeptide is 3-oxoadipate enol-lactonase 2 (catD) (Acinetobacter baylyi (strain ATCC 33305 / BD413 / ADP1)).